We begin with the raw amino-acid sequence, 41 residues long: Pi-stichotoxin-Hcr5b (41 aa).

3 disulfide bridges follow: Cys-4-Cys-37, Cys-6-Cys-30, and Cys-20-Cys-38.

This sequence belongs to the sea anemone type 3 (BDS) potassium channel toxin family.

It localises to the secreted. It is found in the nematocyst. Its function is as follows. Remarkably non-selective toxin, with activity on many different ion channels. Weakly and reversibly inhibits rat and human homomeric ASIC1 (isoform ASIC1a) (IC(50)=4.8 uM, and IC(50)=14.6 uM), and ASIC3 (IC(50)=15.9 uM). Molecular modeling interaction with ASIC1a suggests that this peptide hinders the collapse of acidic pockets and stabilizes nonconducting channels state. It activates several potassium channels including Kv1.1/KCNA1, Kv1.2/KCNA2, and drosophila Shaker IR. It moderately to potently inhibits potassium channels including Kv1.3/KCNA3, Kv1.4/KCNA4, Kv1.5/KCNA5, Kv1.6/KCNA6, Kv2.1/KCNB1, Kv4.2/KCND2, Kv7.1/KCNQ1, Kv7.2/Kv7.3 (KCNQ2/KCNQ3), Kv7.4/KCNQ4, hERG/KCNH2, and C.elegans QKT1. On sodium channels, it moderately to potently inhibits Nav1.1/SCN1A, Nav1.2/SCN2A, Nav1.3/SCN3A, Nav1.4/SCN4A, Nav1.5/SCN5A, Nav1.6/SCN8A, Nav1.7/SCN9A, Nav1.8/SCN10A, and B.germanica BgNav. It also moderately to potently inhibits Cav3.1/CACNA1G, Cav3.2/CACNA1H, and Cav3.3/CACNA1I. Significant shifts in the voltage-current relationship are observed on Kv and Nav, depending on the channel isoform, whereas the toxin does not seem to modulate the voltage-sensor domains of Cav channels, acting mainly as a pore blocker. Does not activate nicotinic acetylcholine receptors (nAChR), but potentiates ACh-elicited current of human alpha-7/CHRNA7 nAChR. Is also able to bind T.californica muscle-type nAChRs. In vivo, causes an excitatory effect in mice behavior. Also shows antihyperalgesic and analgesic activity in the acid-induced muscle pain mice model, and weak anti-inflammatory effect in models of acute local inflammation. This Radianthus crispa (Leathery sea anemone) protein is Pi-stichotoxin-Hcr5b.